Consider the following 345-residue polypeptide: Methionine import ATP-binding protein MetN (345 aa).

Positions 2–241 constitute an ABC transporter domain; the sequence is IKLKNISKIF…PKTELAQEFI (240 aa). 38–45 provides a ligand contact to ATP; the sequence is GASGAGKS.

The protein belongs to the ABC transporter superfamily. Methionine importer (TC 3.A.1.24) family. The complex is composed of two ATP-binding proteins (MetN), two transmembrane proteins (MetI) and a solute-binding protein (MetQ).

The protein localises to the cell inner membrane. It carries out the reaction L-methionine(out) + ATP + H2O = L-methionine(in) + ADP + phosphate + H(+). The catalysed reaction is D-methionine(out) + ATP + H2O = D-methionine(in) + ADP + phosphate + H(+). Part of the ABC transporter complex MetNIQ involved in methionine import. Responsible for energy coupling to the transport system. The protein is Methionine import ATP-binding protein MetN of Mannheimia succiniciproducens (strain KCTC 0769BP / MBEL55E).